Consider the following 110-residue polypeptide: Large ribosomal subunit protein uL22 (110 aa).

Belongs to the universal ribosomal protein uL22 family. As to quaternary structure, part of the 50S ribosomal subunit.

Its function is as follows. This protein binds specifically to 23S rRNA; its binding is stimulated by other ribosomal proteins, e.g. L4, L17, and L20. It is important during the early stages of 50S assembly. It makes multiple contacts with different domains of the 23S rRNA in the assembled 50S subunit and ribosome. Functionally, the globular domain of the protein is located near the polypeptide exit tunnel on the outside of the subunit, while an extended beta-hairpin is found that lines the wall of the exit tunnel in the center of the 70S ribosome. The chain is Large ribosomal subunit protein uL22 from Pectobacterium atrosepticum (strain SCRI 1043 / ATCC BAA-672) (Erwinia carotovora subsp. atroseptica).